We begin with the raw amino-acid sequence, 374 residues long: Inner membrane transport permease YhhJ (374 aa).

At 1–22 (MRHLRNIFNLGIKELRSLLGDK) the chain is on the cytoplasmic side. A helical transmembrane segment spans residues 23 to 43 (AMLTLIVFSFTVSVYSSATVT). The Periplasmic segment spans residues 44–172 (PGSLNLAPIA…TRMRFNPNLD (129 aa)). Positions 133-369 (NGYIQNIING…TIALLRFRKT (237 aa)) constitute an ABC transmembrane type-2 domain. Residues 173 to 193 (PAWFGGVMAIINNITMLAIVL) traverse the membrane as a helical segment. Over 194–229 (TGSALIREREHGTVEHLLVMPITPFEIMMAKIWSMG) the chain is Cytoplasmic. Residues 230–250 (LVVLVVSGLSLVLMVKGVLGV) traverse the membrane as a helical segment. Residues 251–255 (PIEGS) lie on the Periplasmic side of the membrane. The chain crosses the membrane as a helical span at residues 256–276 (IPLFMLGVALSLFATTSIGIF). The Cytoplasmic segment spans residues 277–283 (MGTIARS). Residues 284–304 (MPQLGLLVILVLLPLQMLSGG) traverse the membrane as a helical segment. The Periplasmic portion of the chain corresponds to 305–342 (STPRESMPQMVQDIMLTMPTTHFVSLAQAILYRGAGFE). Residues 343 to 363 (IVWPQFLTLMAIGGAFFTIAL) form a helical membrane-spanning segment. The Cytoplasmic segment spans residues 364 to 374 (LRFRKTIGTMA).

It belongs to the ABC-2 integral membrane protein family.

Its subcellular location is the cell inner membrane. The sequence is that of Inner membrane transport permease YhhJ (yhhJ) from Escherichia coli (strain K12).